Here is a 195-residue protein sequence, read N- to C-terminus: Heat shock protein beta-8 (195 aa).

Residue Ser56 is modified to Phosphoserine. Position 62 is a phosphothreonine (Thr62). 2 positions are modified to asymmetric dimethylarginine: Arg70 and Arg77. A sHSP domain is found at 73-184; it reads TATARFGVPA…TFGESSFNNE (112 aa). Residues 175-195 form a disordered region; the sequence is TFGESSFNNELPQDSQEVTCT. A compositionally biased stretch (polar residues) spans 176–195; it reads FGESSFNNELPQDSQEVTCT.

Belongs to the small heat shock protein (HSP20) family. In terms of assembly, monomer. Forms a ternary complex with BAG3 and HSPA1A. Component of the chaperone-assisted selective autophagy (CASA) complex consisting of BAG3, HSPA8/HSC70, HSPB8 and STUB1/CHIP. Interacts with HSPB1. Interacts with DNAJB6. Interacts with BAG3. Post-translationally, phosphorylated.

It is found in the cytoplasm. The protein resides in the nucleus. Its function is as follows. Involved in the chaperone-assisted selective autophagy (CASA), a crucial process for protein quality control, particularly in mechanical strained cells and tissues such as muscle. Displays temperature-dependent chaperone activity. This is Heat shock protein beta-8 (HSPB8) from Macaca mulatta (Rhesus macaque).